A 284-amino-acid polypeptide reads, in one-letter code: Hypoxanthine-guanine phosphoribosyltransferase (284 aa).

Residues lysine 129, 194–202, lysine 226, and aspartate 253 contribute to the GMP site; that span reads EDIIDTGKT. Aspartate 198 acts as the Proton acceptor in catalysis. Aspartate 253 contributes to the Mg(2+) binding site.

Belongs to the purine/pyrimidine phosphoribosyltransferase family. As to quaternary structure, homotetramer. Requires Mg(2+) as cofactor.

The protein localises to the cytoplasm. It carries out the reaction IMP + diphosphate = hypoxanthine + 5-phospho-alpha-D-ribose 1-diphosphate. The enzyme catalyses GMP + diphosphate = guanine + 5-phospho-alpha-D-ribose 1-diphosphate. The protein operates within purine metabolism; IMP biosynthesis via salvage pathway; IMP from hypoxanthine: step 1/1. In terms of biological role, converts guanine to guanosine monophosphate, and hypoxanthine to inosine monophosphate. Transfers the 5-phosphoribosyl group from 5-phosphoribosylpyrophosphate onto the purine. Plays a central role in the generation of purine nucleotides through the purine salvage pathway. This chain is Hypoxanthine-guanine phosphoribosyltransferase (HGPRT), found in Schistosoma mansoni (Blood fluke).